Consider the following 506-residue polypeptide: GTPase Der (506 aa).

2 consecutive EngA-type G domains span residues 3 to 166 (PVVA…GEQL) and 218 to 391 (IKIA…ACAT). Residues 9–16 (GRPNVGKS), 56–60 (DTGGI), 118–121 (NKTD), 224–231 (GRPNVGKS), 271–275 (DTAGV), and 336–339 (NKWD) contribute to the GTP site. A KH-like domain is found at 392–476 (QKTSTSMLTR…PIRIQFQEGN (85 aa)).

It belongs to the TRAFAC class TrmE-Era-EngA-EngB-Septin-like GTPase superfamily. EngA (Der) GTPase family. In terms of assembly, associates with the 50S ribosomal subunit.

In terms of biological role, GTPase that plays an essential role in the late steps of ribosome biogenesis. This chain is GTPase Der, found in Actinobacillus pleuropneumoniae serotype 3 (strain JL03).